Consider the following 303-residue polypeptide: Small ribosomal subunit protein uS2 (303 aa).

Positions 258–303 (ATLRENAVVTENEVKKTDEEEGASSEAARADAQNEEAVAKPGEEVE) are disordered. The span at 294–303 (AVAKPGEEVE) shows a compositional bias: basic and acidic residues.

Belongs to the universal ribosomal protein uS2 family.

This chain is Small ribosomal subunit protein uS2, found in Bifidobacterium animalis subsp. lactis (strain AD011).